The chain runs to 262 residues: Type III pantothenate kinase (262 aa).

An ATP-binding site is contributed by 6 to 13 (DVGNTNAV). Substrate-binding positions include Tyr100 and 107–110 (GADR). Catalysis depends on Asp109, which acts as the Proton acceptor. Asp129 contributes to the K(+) binding site. Thr132 is an ATP binding site. Residue Thr184 participates in substrate binding.

It belongs to the type III pantothenate kinase family. As to quaternary structure, homodimer. NH4(+) serves as cofactor. The cofactor is K(+).

Its subcellular location is the cytoplasm. It catalyses the reaction (R)-pantothenate + ATP = (R)-4'-phosphopantothenate + ADP + H(+). Its pathway is cofactor biosynthesis; coenzyme A biosynthesis; CoA from (R)-pantothenate: step 1/5. Catalyzes the phosphorylation of pantothenate (Pan), the first step in CoA biosynthesis. This chain is Type III pantothenate kinase, found in Bacillus cytotoxicus (strain DSM 22905 / CIP 110041 / 391-98 / NVH 391-98).